The chain runs to 1317 residues: Clustered mitochondria protein homolog (1317 aa).

The 245-residue stretch at 382 to 626 (DITRSQESYL…RVTPLDVTWQ (245 aa)) folds into the Clu domain. Residues 669-689 (KAQEEAANKEQSSEVTESKEQ) are compositionally biased toward basic and acidic residues. Disordered regions lie at residues 669 to 700 (KAQEEAANKEQSSEVTESKEQESEEKAEEALD) and 939 to 966 (ANGVNGASHDEGKKKKKKGGDSKSPSRA). 3 TPR repeats span residues 1040–1073 (AKLYHQLSMLYYQTDEKEAAVELARKAVIVTERT), 1082–1115 (ILAYLNLSLFEHASGNTKAALVYIKHAMDLWKII), and 1124–1157 (ITTMNNAAVMLQHLKQYSDSRKWFEASLAVCESL). Disordered regions lie at residues 1252-1273 (VQPQVGQTAPEASGAKGAANAS) and 1288-1317 (GGDATSSRSKQKKRAAASNPKLRGSKKSSA).

It belongs to the CLU family. May associate with the eukaryotic translation initiation factor 3 (eIF-3) complex.

The protein localises to the cytoplasm. Its function is as follows. mRNA-binding protein involved in proper cytoplasmic distribution of mitochondria. The protein is Clustered mitochondria protein homolog of Neosartorya fischeri (strain ATCC 1020 / DSM 3700 / CBS 544.65 / FGSC A1164 / JCM 1740 / NRRL 181 / WB 181) (Aspergillus fischerianus).